The sequence spans 102 residues: Large ribosomal subunit protein uL23 (102 aa).

The protein belongs to the universal ribosomal protein uL23 family. Part of the 50S ribosomal subunit. Contacts protein L29, and trigger factor when it is bound to the ribosome.

Functionally, one of the early assembly proteins it binds 23S rRNA. One of the proteins that surrounds the polypeptide exit tunnel on the outside of the ribosome. Forms the main docking site for trigger factor binding to the ribosome. This chain is Large ribosomal subunit protein uL23, found in Chromobacterium violaceum (strain ATCC 12472 / DSM 30191 / JCM 1249 / CCUG 213 / NBRC 12614 / NCIMB 9131 / NCTC 9757 / MK).